The primary structure comprises 363 residues: Class I histocompatibility antigen, Gogo-B*0201 alpha chain (363 aa).

Residues 1–24 form the signal peptide; it reads MQVTAPRTLLLLLSAALALTETWA. Residues 25–114 are alpha-1; sequence GSHSMRYFHT…LRGYYNQSED (90 aa). The Extracellular segment spans residues 25–308; the sequence is GSHSMRYFHT…EPSSQSTIPI (284 aa). N-linked (GlcNAc...) asparagine glycosylation is present at asparagine 110. Residues 115–206 are alpha-2; sequence GSHTIQRMYG…ENGKETLQRA (92 aa). Intrachain disulfides connect cysteine 125–cysteine 188 and cysteine 227–cysteine 283. The tract at residues 207–298 is alpha-3; that stretch reads DPPKTHVTHH…GLPEPLTLRW (92 aa). Residues 209 to 297 form the Ig-like C1-type domain; that stretch reads PKTHVTHHPI…EGLPEPLTLR (89 aa). Residues 299-308 form a connecting peptide region; it reads EPSSQSTIPI. A helical membrane pass occupies residues 309–333; sequence VGIVAGLAVLVVTVAVVAVVAAVMC. At 334 to 363 the chain is on the cytoplasmic side; that stretch reads RRKSSGGKGGSYSQAASSDSAQGSDVSLTA. A disordered region spans residues 336 to 363; it reads KSSGGKGGSYSQAASSDSAQGSDVSLTA. Residues 344 to 363 are compositionally biased toward low complexity; that stretch reads SYSQAASSDSAQGSDVSLTA.

This sequence belongs to the MHC class I family. As to quaternary structure, heterodimer of an alpha chain and a beta chain (beta-2-microglobulin).

The protein resides in the membrane. In terms of biological role, involved in the presentation of foreign antigens to the immune system. This chain is Class I histocompatibility antigen, Gogo-B*0201 alpha chain, found in Gorilla gorilla gorilla (Western lowland gorilla).